The primary structure comprises 337 residues: S-adenosylmethionine:tRNA ribosyltransferase-isomerase (337 aa).

It belongs to the QueA family. Monomer.

It localises to the cytoplasm. It carries out the reaction 7-aminomethyl-7-carbaguanosine(34) in tRNA + S-adenosyl-L-methionine = epoxyqueuosine(34) in tRNA + adenine + L-methionine + 2 H(+). The protein operates within tRNA modification; tRNA-queuosine biosynthesis. In terms of biological role, transfers and isomerizes the ribose moiety from AdoMet to the 7-aminomethyl group of 7-deazaguanine (preQ1-tRNA) to give epoxyqueuosine (oQ-tRNA). The sequence is that of S-adenosylmethionine:tRNA ribosyltransferase-isomerase from Legionella pneumophila (strain Corby).